A 133-amino-acid chain; its full sequence is Phosphoribosyl-AMP cyclohydrolase (133 aa).

Asp-77 lines the Mg(2+) pocket. Cys-78 is a Zn(2+) binding site. Mg(2+)-binding residues include Asp-79 and Asp-81. Cys-95 and Cys-102 together coordinate Zn(2+).

Belongs to the PRA-CH family. In terms of assembly, homodimer. It depends on Mg(2+) as a cofactor. The cofactor is Zn(2+).

It is found in the cytoplasm. It catalyses the reaction 1-(5-phospho-beta-D-ribosyl)-5'-AMP + H2O = 1-(5-phospho-beta-D-ribosyl)-5-[(5-phospho-beta-D-ribosylamino)methylideneamino]imidazole-4-carboxamide. It participates in amino-acid biosynthesis; L-histidine biosynthesis; L-histidine from 5-phospho-alpha-D-ribose 1-diphosphate: step 3/9. Its function is as follows. Catalyzes the hydrolysis of the adenine ring of phosphoribosyl-AMP. This chain is Phosphoribosyl-AMP cyclohydrolase, found in Thiobacillus denitrificans (strain ATCC 25259 / T1).